The sequence spans 147 residues: Ribosomal RNA large subunit methyltransferase H (147 aa).

Residues Leu64, Gly95, and 114-119 each bind S-adenosyl-L-methionine; that span reads LSSLTL.

Belongs to the RNA methyltransferase RlmH family. In terms of assembly, homodimer.

The protein localises to the cytoplasm. The enzyme catalyses pseudouridine(1915) in 23S rRNA + S-adenosyl-L-methionine = N(3)-methylpseudouridine(1915) in 23S rRNA + S-adenosyl-L-homocysteine + H(+). Functionally, specifically methylates the pseudouridine at position 1915 (m3Psi1915) in 23S rRNA. In Polynucleobacter asymbioticus (strain DSM 18221 / CIP 109841 / QLW-P1DMWA-1) (Polynucleobacter necessarius subsp. asymbioticus), this protein is Ribosomal RNA large subunit methyltransferase H.